We begin with the raw amino-acid sequence, 1001 residues long: MSYDYHQSWSRDGGPRGSGQGSSGGGGGGSRGSGGGGGGRGGRGRHPAHLKGREIGLWYAKKQTQKNKEAERQERAVVHMDERREEQIVQLLNSVQAKTDKDSEAQISWFAPEDHGYGTEVSSEKKINSEKKLDNQEKKLLNQEKKTFRITDKSYIDRDSEYLLQENEPNLSLDQHLLEDLQRKKTDPRYIEMQRFRKKLPSYGMQKELVNLINNHQVTVISGETGCGKTTQVTQFILDNYIERGKGSACRIVCTQPRRISAISVAERVATERAESCGNGNSTGYQIRLQSRLPRKQGSILYCTTGIILQWLQSDSRLSSVSHIVLDEIHERNLQSDVLMTVIKDLLHFRSDLKVILMSATLNAEKFSEYFGNCPMIHIPGFTFPVVEYLLEDIIEKIRYVPDQKEHRSQFKRGFMQGHVNRQEKEEKEAIYKERWPAYIKELRTRYSASTVDVLQMMDDDKVDLNLIAALIRYIVLEEEDGAILVFLPGWDNISTLHDLLMSQVMFKSDKFLIIPLHSLMPTVNQTQVFKKTPPGVRKIVIATNIAETSITIDDVVYVIDGGKIKETHFDTQNNISTMSAEWVSKANAKQRKGRAGRVQPGHCYHLYNGLRASLLDDYQLPEILRTPLEELCLQIKILRLGGIAYFLSRLMDPPSNEAVVLSIKHLMELSALDKQEELTPLGVHLARLPVEPHIGKMILFGALFCCLDPVLTIAASLSFKDPFVIPLGKEKIADARRKELAKETRSDHLTVVNAFEGWEEAKRRGFRYEKDYCWEYFLSSNTLQMLHNMKGQFAEHLLGAGFVSSRSPKDPKANINSDNEKIIKAVICAGLYPKVAKIRLNLGKKRKMVKVHTKSDGLVSIHPKSVNVEQTDFHYNWLIYHLKMRTSSIYLYDCTEVSPYCLLFFGGDISIQKDKDQEIIAVDEWIVFQSPERIAHLVKGLRKELDSLLQEKIESPHPVDWDDTKSRDCAVLSAILDLIKTQEKATPRNLPPRSQDGYYS.

The tract at residues 1-44 (MSYDYHQSWSRDGGPRGSGQGSSGGGGGGSRGSGGGGGGRGGRG) is required for recruitment to cytoplasmic stress granules. The disordered stretch occupies residues 1 to 54 (MSYDYHQSWSRDGGPRGSGQGSSGGGGGGSRGSGGGGGGRGGRGRHPAHLKGRE). A required for the pre-miR-134 transport region spans residues 1–97 (MSYDYHQSWS…IVQLLNSVQA (97 aa)). The tract at residues 1–193 (MSYDYHQSWS…KKTDPRYIEM (193 aa)) is necessary for nuclear and nucleolar caps localizations. Residues 15-41 (PRGSGQGSSGGGGGGSRGSGGGGGGRG) show a composition bias toward gly residues. Residues 46-68 (HPAHLKGREIGLWYAKKQTQKNK) are DSM (DHX36-specific motif). A required for G4-DNA- and G4-RNA-binding region spans residues 46–98 (HPAHLKGREIGLWYAKKQTQKNKEAERQERAVVHMDERREEQIVQLLNSVQAK). RecA-like domain stretches follow at residues 99–379 (TDKD…MIHI) and 380–621 (PGFT…DYQL). A coiled-coil region spans residues 120 to 147 (EVSSEKKINSEKKLDNQEKKLLNQEKKT). S154 carries the phosphoserine modification. Positions 210-380 (VNLINNHQVT…FGNCPMIHIP (171 aa)) constitute a Helicase ATP-binding domain. An ATP-binding site is contributed by 226–231 (GCGKTT). The segment at 258–310 (RRISAISVAERVATERAESCGNGNSTGYQIRLQSRLPRKQGSILYCTTGIILQ) is necessary for interaction with single-stranded DNA at the 3'-end of the G4-DNA structure. The short motif at 327-330 (DEIH) is the DEAH box element. 2 residues coordinate Mg(2+): E328 and H330. The region spanning 470-640 (ALIRYIVLEE…ELCLQIKILR (171 aa)) is the Helicase C-terminal domain. Positions 491-550 (WDNISTLHDLLMSQVMFKSDKFLIIPLHSLMPTVNQTQVFKKTPPGVRKIVIATNIAETS) are necessary for interaction with single-stranded DNA at the 3'-end of the G4-DNA structure. Positions 510 to 521 (DKFLIIPLHSLM) match the Nuclear localization signal motif. Residues S550 and 595-598 (RAGR) each bind ATP. Positions 622–691 (PEILRTPLEE…LGVHLARLPV (70 aa)) are WH domain. Necessary for interaction with single-stranded DNA at the 3'-end of the G4-DNA structure regions lie at residues 631 to 690 (ELCL…ARLP), 842 to 853 (NLGKKRKMVKVH), and 863 to 893 (HPKSVNVEQTDFHYNWLIYHLKMRTSSIYLY). An OB-fold-like subdomains region spans residues 834-898 (PKVAKIRLNL…SIYLYDCTEV (65 aa)). An N6-acetyllysine modification is found at K940. Residue S956 is modified to Phosphoserine.

This sequence belongs to the DEAD box helicase family. DEAH subfamily. As to quaternary structure, found in a multi-helicase-TICAM1 complex at least composed of DHX36, DDX1, DDX21 and TICAM1; this complex exists in resting cells with or without dsRNA poly(I:C) ligand stimulation. Interacts (via C-terminus) with TICAM1 (via TIR domain). Interacts (via C-terminus) with DDX21; this interaction serves as bridges to TICAM1. Interacts with TERT; this interaction is dependent on the ability of DHX36 to bind to the G-quadruplex RNA (G4-RNA) structure present in the telomerase RNA template component (TERC). Interacts with DKC1; this interaction is dependent on the ability of DHX36 to bind to the G4-RNA structure present in TERC. Interacts with PARN; this interaction stimulates PARN to enhance uPA mRNA decay. Interacts with EXOSC3; this interaction occurs in a RNase-insensitive manner. Interacts with EXOSC10; this interaction occurs in a RNase-insensitive manner. Interacts with ILF3; this interaction occurs in a RNA-dependent manner. Interacts with ELAVL1; this interaction occurs in an RNA-dependent manner. Interacts with DDX5; this interaction occurs in a RNA-dependent manner. Interacts with DDX17; this interaction occurs in a RNA-dependent manner. Interacts with HDAC1; this interaction occurs in a RNA-dependent manner. Interacts with HDAC3; this interaction occurs in a RNA-dependent manner. Interacts with HDAC4. Interacts with AGO1. Interacts with AGO2. Interacts with ERCC6. Mg(2+) is required as a cofactor. In terms of tissue distribution, expressed in spermatogonia stem cells and primary spermatocytes (at protein level). Expressed strongly in testis. Weakly expressed in heart, lung, liver, kidney, small intestine, spleen, lymphe node and thymus.

The protein localises to the nucleus. Its subcellular location is the cytoplasm. It localises to the cytosol. It is found in the stress granule. The protein resides in the nucleus speckle. The protein localises to the chromosome. Its subcellular location is the telomere. It localises to the mitochondrion. It is found in the perikaryon. The protein resides in the cell projection. The protein localises to the dendrite. Its subcellular location is the axon. It carries out the reaction ATP + H2O = ADP + phosphate + H(+). With respect to regulation, ATPase activity is enhanced in the presence of homomeric poly(U) RNAs, but not by double-stranded DNA (dsDNA), double-stranded RNA (dsRNA) and tRNA. Its function is as follows. Multifunctional ATP-dependent helicase that unwinds G-quadruplex (G4) structures. Plays a role in many biological processes such as genomic integrity, gene expression regulations and as a sensor to initiate antiviral responses. G4 structures correspond to helical structures containing guanine tetrads. Binds with high affinity to and unwinds G4 structures that are formed in nucleic acids (G4-DNA and G4-RNA). Plays a role in genomic integrity. Converts the G4-RNA structure present in telomerase RNA template component (TREC) into a double-stranded RNA to promote P1 helix formation that acts as a template boundary ensuring accurate reverse transcription. Plays a role in transcriptional regulation. Resolves G4-DNA structures in promoters of genes, such as YY1, KIT/c-kit and ALPL and positively regulates their expression. Plays a role in post-transcriptional regulation. Unwinds a G4-RNA structure located in the 3'-UTR polyadenylation site of the pre-mRNA TP53 and stimulates TP53 pre-mRNA 3'-end processing in response to ultraviolet (UV)-induced DNA damage. Binds to the precursor-microRNA-134 (pre-miR-134) terminal loop and regulates its transport into the synapto-dendritic compartment. Involved in the pre-miR-134-dependent inhibition of target gene expression and the control of dendritic spine size. Plays a role in the regulation of cytoplasmic mRNA translation and mRNA stability. Binds to both G4-RNA structures and alternative non-quadruplex-forming sequence within the 3'-UTR of the PITX1 mRNA regulating negatively PITX1 protein expression. Binds to both G4-RNA structure in the 5'-UTR and AU-rich elements (AREs) localized in the 3'-UTR of NKX2-5 mRNA to either stimulate protein translation or induce mRNA decay in an ELAVL1-dependent manner, respectively. Also binds to ARE sequences present in several mRNAs mediating exosome-mediated 3'-5' mRNA degradation. Involved in cytoplasmic urokinase-type plasminogen activator (uPA) mRNA decay. Component of a multi-helicase-TICAM1 complex that acts as a cytoplasmic sensor of viral double-stranded RNA (dsRNA) and plays a role in the activation of a cascade of antiviral responses including the induction of pro-inflammatory cytokines via the adapter molecule TICAM1. Required for the early embryonic development and hematopoiesis. Involved in the regulation of cardioblast differentiation and proliferation during heart development. Involved in spermatogonia differentiation. May play a role in ossification. This is ATP-dependent DNA/RNA helicase DHX36 from Mus musculus (Mouse).